The sequence spans 185 residues: Photosystem I assembly protein Ycf4 (185 aa).

2 consecutive transmembrane segments (helical) span residues 24–44 (YIIGGMLTIGGIGFLLASISS) and 66–86 (IIMGAYGVVANLLNFYLWYMV).

It belongs to the Ycf4 family.

The protein localises to the cellular thylakoid membrane. Its function is as follows. Seems to be required for the assembly of the photosystem I complex. The sequence is that of Photosystem I assembly protein Ycf4 from Prochlorococcus marinus (strain MIT 9312).